Consider the following 337-residue polypeptide: Large ribosomal subunit protein uL3 (337 aa).

Positions 1-26 (MGHAHAPRRGSLGYSPRVRARSQKPK) are disordered.

It belongs to the universal ribosomal protein uL3 family. In terms of assembly, part of the 50S ribosomal subunit. Forms a cluster with proteins L14 and L24e.

In terms of biological role, one of the primary rRNA binding proteins, it binds directly near the 3'-end of the 23S rRNA, where it nucleates assembly of the 50S subunit. This is Large ribosomal subunit protein uL3 from Methanocella arvoryzae (strain DSM 22066 / NBRC 105507 / MRE50).